Consider the following 72-residue polypeptide: Translation initiation factor IF-1 (72 aa).

One can recognise an S1-like domain in the interval 1 to 72 (MAKEDSIEME…SKGRIVYRAR (72 aa)).

The protein belongs to the IF-1 family. Component of the 30S ribosomal translation pre-initiation complex which assembles on the 30S ribosome in the order IF-2 and IF-3, IF-1 and N-formylmethionyl-tRNA(fMet); mRNA recruitment can occur at any time during PIC assembly.

The protein resides in the cytoplasm. One of the essential components for the initiation of protein synthesis. Stabilizes the binding of IF-2 and IF-3 on the 30S subunit to which N-formylmethionyl-tRNA(fMet) subsequently binds. Helps modulate mRNA selection, yielding the 30S pre-initiation complex (PIC). Upon addition of the 50S ribosomal subunit IF-1, IF-2 and IF-3 are released leaving the mature 70S translation initiation complex. The chain is Translation initiation factor IF-1 from Nitrosococcus oceani (strain ATCC 19707 / BCRC 17464 / JCM 30415 / NCIMB 11848 / C-107).